The following is a 283-amino-acid chain: F-box only protein 27 (283 aa).

The disordered stretch occupies residues 1 to 23 (MGASVSRGRAARVPAPEPEPEEA). One can recognise an F-box domain in the interval 23–70 (ALDLSQLPPELLLVVLSHVPPRTLLGRCRQVCRGWRALVDGQALWLLI). The 177-residue stretch at 104–280 (FCARRPIGRN…VTNSSVIVRV (177 aa)) folds into the FBA domain.

In terms of assembly, part of a SCF (SKP1-cullin-F-box) protein ligase complex. Interacts with SKP1 and CUL1. As to expression, predominantly expressed in brain, heart and kidney. Expressed at lower levels in liver and lung.

Functionally, substrate-recognition component of the SCF (SKP1-CUL1-F-box protein)-type E3 ubiquitin ligase complex. Able to recognize and bind denatured glycoproteins, which are modified with complex-type oligosaccharides. The chain is F-box only protein 27 (FBXO27) from Homo sapiens (Human).